The chain runs to 77 residues: Acyl carrier protein (77 aa).

The Carrier domain occupies 2–77 (ADALERVTKI…DAVNYINSKQ (76 aa)). Residue Ser-37 is modified to O-(pantetheine 4'-phosphoryl)serine.

It belongs to the acyl carrier protein (ACP) family. 4'-phosphopantetheine is transferred from CoA to a specific serine of apo-ACP by AcpS. This modification is essential for activity because fatty acids are bound in thioester linkage to the sulfhydryl of the prosthetic group.

Its subcellular location is the cytoplasm. Its pathway is lipid metabolism; fatty acid biosynthesis. In terms of biological role, carrier of the growing fatty acid chain in fatty acid biosynthesis. The protein is Acyl carrier protein of Bacillus licheniformis (strain ATCC 14580 / DSM 13 / JCM 2505 / CCUG 7422 / NBRC 12200 / NCIMB 9375 / NCTC 10341 / NRRL NRS-1264 / Gibson 46).